The chain runs to 252 residues: Small ribosomal subunit protein uS3 (252 aa).

In terms of domain architecture, KH type-2 spans 39–111 (IRKLINNFAK…EVNLNVLEVK (73 aa)). The segment at 222–252 (KPFASQSSNTPNRRPRNFKGGNNNHVNAKKN) is disordered. The span at 241 to 252 (GGNNNHVNAKKN) shows a compositional bias: polar residues.

It belongs to the universal ribosomal protein uS3 family. As to quaternary structure, part of the 30S ribosomal subunit. Forms a tight complex with proteins S10 and S14.

In terms of biological role, binds the lower part of the 30S subunit head. Binds mRNA in the 70S ribosome, positioning it for translation. In Phytoplasma sp. (strain STRAWB2), this protein is Small ribosomal subunit protein uS3.